We begin with the raw amino-acid sequence, 332 residues long: Transaldolase (332 aa).

Residue K135 is the Schiff-base intermediate with substrate of the active site.

The protein belongs to the transaldolase family. Type 1 subfamily. In terms of assembly, homodimer.

The protein resides in the cytoplasm. The catalysed reaction is D-sedoheptulose 7-phosphate + D-glyceraldehyde 3-phosphate = D-erythrose 4-phosphate + beta-D-fructose 6-phosphate. The protein operates within carbohydrate degradation; pentose phosphate pathway; D-glyceraldehyde 3-phosphate and beta-D-fructose 6-phosphate from D-ribose 5-phosphate and D-xylulose 5-phosphate (non-oxidative stage): step 2/3. Transaldolase is important for the balance of metabolites in the pentose-phosphate pathway. This chain is Transaldolase, found in Prochlorococcus marinus (strain NATL2A).